A 568-amino-acid polypeptide reads, in one-letter code: Sphingosine-1-phosphate lyase 1 (568 aa).

Over 1 to 40 the chain is Lumenal; that stretch reads MPSTDLLMLKAFEPYLEILEVYSTKAKNYVNGHCTKYEPW. The chain crosses the membrane as a helical; Signal-anchor for type III membrane protein span at residues 41 to 61; it reads QLIAWSVVWTLLIVWGYEFVF. Over 62-568 the chain is Cytoplasmic; it reads QPESLWSRFK…SQMNGSPKPH (507 aa). An N6-(pyridoxal phosphate)lysine; alternate modification is found at Lys353. N6-acetyllysine; alternate is present on Lys353. Tyr356 and Tyr366 each carry 3'-nitrotyrosine. Ser564 carries the post-translational modification Phosphoserine.

The protein belongs to the group II decarboxylase family. Sphingosine-1-phosphate lyase subfamily. In terms of assembly, homodimer. Requires pyridoxal 5'-phosphate as cofactor. As to expression, ubiquitously expressed. Expressed in fetal and adult adrenal gland (at protein level).

The protein resides in the endoplasmic reticulum membrane. The enzyme catalyses sphinganine 1-phosphate = hexadecanal + phosphoethanolamine. The catalysed reaction is sphing-4-enine 1-phosphate = (2E)-hexadecenal + phosphoethanolamine. It functions in the pathway lipid metabolism; sphingolipid metabolism. Cleaves phosphorylated sphingoid bases (PSBs), such as sphingosine-1-phosphate, into fatty aldehydes and phosphoethanolamine. Elevates stress-induced ceramide production and apoptosis. Required for global lipid homeostasis in liver and cholesterol homeostasis in fibroblasts. Involved in the regulation of pro-inflammatory response and neutrophil trafficking. Modulates neuronal autophagy via phosphoethanolamine production which regulates accumulation of aggregate-prone proteins such as APP. Seems to play a role in establishing neuronal contact sites and axonal maintenance. This is Sphingosine-1-phosphate lyase 1 from Homo sapiens (Human).